We begin with the raw amino-acid sequence, 91 residues long: Small ribosomal subunit protein uS19 (91 aa).

The protein belongs to the universal ribosomal protein uS19 family.

Functionally, protein S19 forms a complex with S13 that binds strongly to the 16S ribosomal RNA. This is Small ribosomal subunit protein uS19 from Pseudomonas paraeruginosa (strain DSM 24068 / PA7) (Pseudomonas aeruginosa (strain PA7)).